We begin with the raw amino-acid sequence, 131 residues long: MKKTKVINSDLSRVIATMGHFDKLSIGDAGMPVPSSTEKIDLAVDNGIPSFMQVLNNVLEELEVQRIYLAEEIKVQNPKMLTAIKKRLPDTPITFIPHEEMKKDLADCKAFVRTGEMTPYSNILLESGVTF.

His20 (proton donor) is an active-site residue. Residues Asp28, His98, and 120-122 (YSN) each bind substrate.

This sequence belongs to the RbsD / FucU family. RbsD subfamily. As to quaternary structure, homodecamer.

Its subcellular location is the cytoplasm. It catalyses the reaction beta-D-ribopyranose = beta-D-ribofuranose. The protein operates within carbohydrate metabolism; D-ribose degradation; D-ribose 5-phosphate from beta-D-ribopyranose: step 1/2. Its function is as follows. Catalyzes the interconversion of beta-pyran and beta-furan forms of D-ribose. The sequence is that of D-ribose pyranase from Lactiplantibacillus plantarum (strain ATCC BAA-793 / NCIMB 8826 / WCFS1) (Lactobacillus plantarum).